The following is a 461-amino-acid chain: Inositol-trisphosphate 3-kinase A (461 aa).

Residues 1–29 (MTLPGGPTGMARPGGARPCSPGLERAPRR) form a disordered region. Positions 1–133 (MTLPGGPTGM…SVSSTGSSSL (133 aa)) are required for cytoskeleton location. Arginine 35, arginine 55, and arginine 62 each carry omega-N-methylarginine. Residues 49–160 (AAAGEPRARG…GNVQLEAGED (112 aa)) are disordered. The span at 118–134 (RRLSTSSVSSTGSSSLL) shows a compositional bias: low complexity. Serine 137 and serine 197 each carry phosphoserine. Residues serine 197, lysine 209, 249–251 (QDL), and aspartate 262 contribute to the ATP site. Residues lysine 264 and arginine 285 each contribute to the substrate site. A calmodulin-binding region spans residues 287–295 (DMYKKMLAV). A substrate-binding site is contributed by 312–319 (KPRYMQWR). ATP contacts are provided by lysine 336 and aspartate 416. Lysine 419 is a substrate binding site.

This sequence belongs to the inositol phosphokinase (IPK) family. As to expression, expressed in brain.

It localises to the cytoplasm. The protein resides in the cytoskeleton. It catalyses the reaction 1D-myo-inositol 1,4,5-trisphosphate + ATP = 1D-myo-inositol 1,3,4,5-tetrakisphosphate + ADP + H(+). With respect to regulation, activated by calcium/calmodulin. Its function is as follows. Catalyzes the phosphorylation of 1D-myo-inositol 1,4,5-trisphosphate (InsP3) into 1D-myo-inositol 1,3,4,5-tetrakisphosphate and participates to the regulation of calcium homeostasis. The chain is Inositol-trisphosphate 3-kinase A from Homo sapiens (Human).